The following is a 299-amino-acid chain: Glycine--tRNA ligase alpha subunit (299 aa).

It belongs to the class-II aminoacyl-tRNA synthetase family. As to quaternary structure, tetramer of two alpha and two beta subunits.

Its subcellular location is the cytoplasm. It carries out the reaction tRNA(Gly) + glycine + ATP = glycyl-tRNA(Gly) + AMP + diphosphate. This Caulobacter vibrioides (strain ATCC 19089 / CIP 103742 / CB 15) (Caulobacter crescentus) protein is Glycine--tRNA ligase alpha subunit.